The following is a 939-amino-acid chain: Nonsense-mediated mRNA decay factor SMG8 (939 aa).

Disordered regions lie at residues 561–600 (KICT…QLSP) and 617–645 (LNES…ADTE). Acidic residues predominate over residues 567–587 (GEDENEDGETEEADEDTEEKE). Over residues 617–629 (LNESQESSEQLSG) the composition is skewed to low complexity.

It belongs to the SMG8 family.

Its function is as follows. Involved in nonsense-mediated decay (NMD) of mRNAs containing premature stop codons. Probable component of kinase complex containing nonC and recruited to stalled ribosomes. The sequence is that of Nonsense-mediated mRNA decay factor SMG8 from Drosophila ananassae (Fruit fly).